The sequence spans 160 residues: Phosphopantetheine adenylyltransferase (160 aa).

Ser-10 contacts substrate. Residues 10-11 (SF) and His-18 contribute to the ATP site. Substrate-binding residues include Lys-42, Thr-74, and Arg-88. ATP is bound by residues 89–91 (GLR), Glu-99, and 124–130 (YSFVSST).

This sequence belongs to the bacterial CoaD family. As to quaternary structure, homohexamer. Requires Mg(2+) as cofactor.

The protein localises to the cytoplasm. It catalyses the reaction (R)-4'-phosphopantetheine + ATP + H(+) = 3'-dephospho-CoA + diphosphate. It participates in cofactor biosynthesis; coenzyme A biosynthesis; CoA from (R)-pantothenate: step 4/5. Reversibly transfers an adenylyl group from ATP to 4'-phosphopantetheine, yielding dephospho-CoA (dPCoA) and pyrophosphate. The protein is Phosphopantetheine adenylyltransferase of Leptospira biflexa serovar Patoc (strain Patoc 1 / Ames).